The sequence spans 1261 residues: Apoptotic protease-activating factor 1 (1261 aa).

One can recognise a CARD domain in the interval 1–90 (MEERARSRLL…GDLASLLHSD (90 aa)). Positions 106-417 (VSPSVQAILS…LELEEVEDVL (312 aa)) constitute an NB-ARC domain. Position 154-161 (154-161 (GMAGSGKS)) interacts with ATP. WD repeat units lie at residues 615–654 (PHQG…KLLE), 657–696 (AHEE…LIRE), 700–743 (EHEE…SQNT), 746–785 (GHME…EWKS), 798–836 (EIKA…LLLK), 840–879 (SRLS…KKAE), 882–921 (GHLS…TSSA), 964–1003 (ELSS…ASVK), 1006–1045 (GHTK…CMVL), 1047–1088 (GHME…MLQD), 1091–1130 (CHEG…MLFL), 1133–1172 (GHKD…LLKI), and 1184–1223 (YHAG…QTFY).

Monomer. Oligomerizes upon binding of cytochrome c and dATP.

The protein localises to the cytoplasm. In terms of biological role, oligomeric Apaf-1 mediates the cytochrome c-dependent autocatalytic activation of pro-caspase-9 (Apaf-3), leading to the activation of caspase-3 and apoptosis. This activation requires ATP. This is Apoptotic protease-activating factor 1 (apaf1) from Danio rerio (Zebrafish).